A 157-amino-acid chain; its full sequence is Large ribosomal subunit protein uL15 (157 aa).

Residues 1 to 64 (MKLNEIPAVP…MPLQRRLPKR (64 aa)) are disordered. Positions 21-31 (RGPGSGNGKTA) are enriched in gly residues.

Belongs to the universal ribosomal protein uL15 family. As to quaternary structure, part of the 50S ribosomal subunit.

Binds to the 23S rRNA. The protein is Large ribosomal subunit protein uL15 of Magnetococcus marinus (strain ATCC BAA-1437 / JCM 17883 / MC-1).